The primary structure comprises 116 residues: Ribonuclease P protein component (116 aa).

Belongs to the RnpA family. In terms of assembly, consists of a catalytic RNA component (M1 or rnpB) and a protein subunit.

The enzyme catalyses Endonucleolytic cleavage of RNA, removing 5'-extranucleotides from tRNA precursor.. Its function is as follows. RNaseP catalyzes the removal of the 5'-leader sequence from pre-tRNA to produce the mature 5'-terminus. It can also cleave other RNA substrates such as 4.5S RNA. The protein component plays an auxiliary but essential role in vivo by binding to the 5'-leader sequence and broadening the substrate specificity of the ribozyme. In Geobacter sp. (strain M21), this protein is Ribonuclease P protein component.